A 374-amino-acid polypeptide reads, in one-letter code: tRNA N6-adenosine threonylcarbamoyltransferase (374 aa).

Fe cation is bound by residues histidine 117 and histidine 121. Substrate-binding positions include leucine 140–glycine 144, aspartate 174, glycine 187, aspartate 191, and asparagine 283. Aspartate 311 is a Fe cation binding site. Low complexity predominate over residues alanine 337–glycine 352. Residues alanine 337–serine 374 are disordered. A compositionally biased stretch (basic and acidic residues) spans histidine 359–serine 374.

The protein belongs to the KAE1 / TsaD family. Fe(2+) is required as a cofactor.

The protein resides in the cytoplasm. The enzyme catalyses L-threonylcarbamoyladenylate + adenosine(37) in tRNA = N(6)-L-threonylcarbamoyladenosine(37) in tRNA + AMP + H(+). In terms of biological role, required for the formation of a threonylcarbamoyl group on adenosine at position 37 (t(6)A37) in tRNAs that read codons beginning with adenine. Is involved in the transfer of the threonylcarbamoyl moiety of threonylcarbamoyl-AMP (TC-AMP) to the N6 group of A37, together with TsaE and TsaB. TsaD likely plays a direct catalytic role in this reaction. This is tRNA N6-adenosine threonylcarbamoyltransferase from Streptomyces coelicolor (strain ATCC BAA-471 / A3(2) / M145).